We begin with the raw amino-acid sequence, 451 residues long: MQVTETLSEGLKHEFQISVPAADLDAKADAKLVDLKDKVRINGFRPGKVPVAHLKKIYGKSVMAETIDQTIRDTNTQIFTERGFRLATEPKVTMPTEEAEVEKILAGQSDLTYSVAIEVVPAITLADFKTFAVEKPVADITDADVDEAIKRLADANRSYAAKAEGAKAASGDRVKVNFKGTIDGVAFDGGTGEGIDVVIGSNTFIPGFEDQLVGIAVGETRTLKVTFPTNYLNNELAGKAAEFETTATAIEAPEDKVVDDEFAKTLGLESLDKLKELMRDRLAGEFTQATRQRVKRALLDRLDETHKFDAPPSLIDEEFNLMWNSVQAEMKSSGKTFADENTTEDKAKEEYRTIADRRVRLGLVLSEIGEKNKITVTDDEVSRAVIERARSMPGREKEVWDFYRSNPQALAQLRAPIYEDKVVDFILELANVTEKKVSKDELFKDDDDKAA.

The region spanning 171–256 (GDRVKVNFKG…ATAIEAPEDK (86 aa)) is the PPIase FKBP-type domain.

The protein belongs to the FKBP-type PPIase family. Tig subfamily.

It localises to the cytoplasm. The enzyme catalyses [protein]-peptidylproline (omega=180) = [protein]-peptidylproline (omega=0). Functionally, involved in protein export. Acts as a chaperone by maintaining the newly synthesized protein in an open conformation. Functions as a peptidyl-prolyl cis-trans isomerase. This Bradyrhizobium sp. (strain ORS 278) protein is Trigger factor.